Here is a 762-residue protein sequence, read N- to C-terminus: ABC-type oligopeptide transporter ABCB9 (762 aa).

Transmembrane regions (helical) follow at residues 7–27, 47–67, 84–104, 116–136, 181–201, 221–241, 315–335, and 412–432; these read VVVT…IYAF, VLDL…ATIG, LVIT…LLLF, FWAL…LWGL, VAFL…ETFL, FTTA…AAGI, VFMF…FPII, and SGLT…HLVI. The ABC transmembrane type-1 domain maps to 184-467; the sequence is LVAASFFLIV…VGSVYSGLMQ (284 aa). The ABC transporter domain occupies 500 to 736; sequence VDFENVTFTY…GGLYAKLVQR (237 aa). An ATP-binding site is contributed by 535-542; that stretch reads GPSGSGKS.

The protein belongs to the ABC transporter superfamily. ABCB family. MHC peptide exporter (TC 3.A.1.209) subfamily. In terms of assembly, homodimer. Interacts (via TMD0 region) with LAMP1; this interaction strongly stabilizes ABCB9 and protects ABCB9 against lysosomal degradation. Interacts (via TMD0 region) with LAMP2 (isoform LAMP-2B). Interacts (via TMD0) with YIF1B; this interaction allows (but is not essential) the ER-to-Golgi trafficking and strongly depends on a salt bridge within TMD0. In terms of tissue distribution, highly expressed in testis, particularly in the Sertoli cells of the seminiferous tubules, and at moderate levels in brain and spinal cord.

The protein localises to the lysosome membrane. The enzyme catalyses a [oligopeptide](in) + ATP + H2O = a [oligopeptide](out) + ADP + phosphate + H(+). Functionally, ATP-dependent low-affinity peptide transporter which translocates a broad spectrum of peptides from the cytosol to the lysosomal lumen for degradation. Displays a broad peptide length specificity from 6-mer up to at least 59-mer peptides with an optimum of 23-mers. Binds and transports smaller and larger peptides with the same affinity. Favors positively charged, aromatic or hydrophobic residues in the N- and C-terminal positions whereas negatively charged residues as well as asparagine and methionine are not favored. In Mus musculus (Mouse), this protein is ABC-type oligopeptide transporter ABCB9.